We begin with the raw amino-acid sequence, 386 residues long: Probable magnesium transporter NIPA5 (386 aa).

At 1–18 (MVYSSGSWRDAYKGMSSD) the chain is on the extracellular side. Residues 19–39 (NVKGLVLALSSSIFIGASFIV) traverse the membrane as a helical segment. Residues 40 to 61 (KKKGLKKAGASGLRAGSGGYSY) lie on the Cytoplasmic side of the membrane. A run of 2 helical transmembrane segments spans residues 62–82 (LLEPLWWIGMITMIVGEIANF) and 83–103 (AAYAFAPAILVTPLGALSIII). The Cytoplasmic segment spans residues 104–115 (SASLAHIILQEK). The chain crosses the membrane as a helical span at residues 116-136 (LHTFGILGCALCIVGSVTIVL). At 137-157 (HAPQEQDIVSVLEVWNLATEP) the chain is on the extracellular side. The helical transmembrane segment at 158 to 178 (AFLFYAAAVVGAAIVLIVQFI) threads the bilayer. At 179–189 (PLYGQSHVMVY) the chain is on the cytoplasmic side. Residues 190-210 (IGVCSLIGSLSVMSVKALGIA) traverse the membrane as a helical segment. Topologically, residues 211–220 (LKLTFSGTNQ) are extracellular. The chain crosses the membrane as a helical span at residues 221 to 241 (LGYPQTWVFTVIVLFCVITQM). Over 242-255 (NYLNKALDTFNTAV) the chain is Cytoplasmic. Residues 256-276 (VSPIYYVMFTSLTILASVIMF) traverse the membrane as a helical segment. Residues 277 to 283 (KDWDRQS) are Extracellular-facing. Residues 284 to 304 (GTQIMTELCGFVTILSGTFLL) form a helical membrane-spanning segment. The Cytoplasmic portion of the chain corresponds to 305–386 (HTTTDMVDGE…LRRQESSLRS (82 aa)). The segment at 352-386 (RQESAKSPRPARQNKQLEDDLEAVPLRRQESSLRS) is disordered. A compositionally biased stretch (basic and acidic residues) spans 376 to 386 (PLRRQESSLRS).

It belongs to the NIPA (TC 2.A.7) family. Homodimer.

It is found in the cell membrane. It localises to the early endosome. Functionally, acts as a Mg(2+) transporter. Can also transport other divalent cations such as Fe(2+), Sr(2+), Ba(2+), Mn(2+) and Co(2+) but to a much less extent than Mg(2+). The polypeptide is Probable magnesium transporter NIPA5 (Arabidopsis thaliana (Mouse-ear cress)).